We begin with the raw amino-acid sequence, 172 residues long: Large ribosomal subunit protein uL10 (172 aa).

The protein belongs to the universal ribosomal protein uL10 family. As to quaternary structure, part of the ribosomal stalk of the 50S ribosomal subunit. The N-terminus interacts with L11 and the large rRNA to form the base of the stalk. The C-terminus forms an elongated spine to which L12 dimers bind in a sequential fashion forming a multimeric L10(L12)X complex.

Functionally, forms part of the ribosomal stalk, playing a central role in the interaction of the ribosome with GTP-bound translation factors. The polypeptide is Large ribosomal subunit protein uL10 (Rhodopseudomonas palustris (strain TIE-1)).